The sequence spans 196 residues: Carnitine operon protein CaiE (196 aa).

Residues 173–196 (TQPLRQMEENRPRLQGTTDVTPKR) form a disordered region. Residues 187 to 196 (QGTTDVTPKR) show a composition bias toward polar residues.

The protein belongs to the transferase hexapeptide repeat family.

Its pathway is amine and polyamine metabolism; carnitine metabolism. In terms of biological role, overproduction of CaiE stimulates the activity of CaiB and CaiD. The protein is Carnitine operon protein CaiE of Escherichia coli O6:K15:H31 (strain 536 / UPEC).